The sequence spans 218 residues: Hypoxanthine-guanine phosphoribosyltransferase (218 aa).

Alanine 2 is modified (N-acetylalanine). Lysine 69 is a binding site for GMP. The residue at position 103 (lysine 103) is an N6-acetyllysine. A Glycyl lysine isopeptide (Lys-Gly) (interchain with G-Cter in SUMO1); alternate cross-link involves residue lysine 115. A Glycyl lysine isopeptide (Lys-Gly) (interchain with G-Cter in SUMO2); alternate cross-link involves residue lysine 115. GMP is bound by residues 134 to 142, lysine 166, 186 to 188, and aspartate 194; these read EDIIDTGKT and KFV. The active-site Proton acceptor is the aspartate 138. A Phosphothreonine modification is found at threonine 142. Mg(2+) is bound at residue aspartate 194.

It belongs to the purine/pyrimidine phosphoribosyltransferase family. As to quaternary structure, homotetramer. Requires Mg(2+) as cofactor.

The protein resides in the cytoplasm. It catalyses the reaction IMP + diphosphate = hypoxanthine + 5-phospho-alpha-D-ribose 1-diphosphate. The enzyme catalyses GMP + diphosphate = guanine + 5-phospho-alpha-D-ribose 1-diphosphate. It participates in purine metabolism; IMP biosynthesis via salvage pathway; IMP from hypoxanthine: step 1/1. Functionally, converts guanine to guanosine monophosphate, and hypoxanthine to inosine monophosphate. Transfers the 5-phosphoribosyl group from 5-phosphoribosylpyrophosphate onto the purine. Plays a central role in the generation of purine nucleotides through the purine salvage pathway. This chain is Hypoxanthine-guanine phosphoribosyltransferase (HPRT1), found in Homo sapiens (Human).